The following is a 480-amino-acid chain: ATP synthase subunit beta (480 aa).

152 to 159 (GGAGVGKT) lines the ATP pocket.

It belongs to the ATPase alpha/beta chains family. F-type ATPases have 2 components, CF(1) - the catalytic core - and CF(0) - the membrane proton channel. CF(1) has five subunits: alpha(3), beta(3), gamma(1), delta(1), epsilon(1). CF(0) has three main subunits: a(1), b(2) and c(9-12). The alpha and beta chains form an alternating ring which encloses part of the gamma chain. CF(1) is attached to CF(0) by a central stalk formed by the gamma and epsilon chains, while a peripheral stalk is formed by the delta and b chains.

The protein resides in the cell membrane. The catalysed reaction is ATP + H2O + 4 H(+)(in) = ADP + phosphate + 5 H(+)(out). Its function is as follows. Produces ATP from ADP in the presence of a proton gradient across the membrane. The catalytic sites are hosted primarily by the beta subunits. The protein is ATP synthase subunit beta of Wolbachia sp. subsp. Brugia malayi (strain TRS).